A 465-amino-acid chain; its full sequence is Light-independent protochlorophyllide reductase subunit N (465 aa).

C22, C47, and C107 together coordinate [4Fe-4S] cluster.

This sequence belongs to the BchN/ChlN family. As to quaternary structure, protochlorophyllide reductase is composed of three subunits; ChlL, ChlN and ChlB. Forms a heterotetramer of two ChlB and two ChlN subunits. [4Fe-4S] cluster is required as a cofactor.

The protein resides in the plastid. The protein localises to the chloroplast. The enzyme catalyses chlorophyllide a + oxidized 2[4Fe-4S]-[ferredoxin] + 2 ADP + 2 phosphate = protochlorophyllide a + reduced 2[4Fe-4S]-[ferredoxin] + 2 ATP + 2 H2O. Its pathway is porphyrin-containing compound metabolism; chlorophyll biosynthesis (light-independent). Component of the dark-operative protochlorophyllide reductase (DPOR) that uses Mg-ATP and reduced ferredoxin to reduce ring D of protochlorophyllide (Pchlide) to form chlorophyllide a (Chlide). This reaction is light-independent. The NB-protein (ChlN-ChlB) is the catalytic component of the complex. In Marchantia polymorpha (Common liverwort), this protein is Light-independent protochlorophyllide reductase subunit N.